The following is a 245-amino-acid chain: Terpene cyclase esdpB (245 aa).

A run of 7 helical transmembrane segments spans residues methionine 19–isoleucine 39, serine 48–isoleucine 68, isoleucine 75–valine 95, leucine 112–methionine 132, leucine 140–isoleucine 160, phenylalanine 177–alanine 197, and tryptophan 208–serine 228.

It belongs to the paxB family.

The protein localises to the membrane. The protein operates within secondary metabolite biosynthesis; terpenoid biosynthesis. In terms of biological role, terpene cyclase; part of the cluster that mediates the biosynthesis of shearones, diterpenoid pyrones (DPs) which are structurally diverse meroterpenoids consisting of a diterpene linked by a pyrone, and which may exhibit a range of bioactivities. Within the pathway, esdpB takes part to the biosynthesis of the molecular scaffold by catalyzing the cyclization of the prenyl group initiated by protonation and ring-opening of the epoxide to produce the diterpenoid pyrone scaffold. The molecular scaffold is commonly biosynthesized by a series of enzymes including the non-reducing polyketide synthase (NR-PKS) esdpA that generates an alpha-pyrone; the prenyltransferase esdpC that attaches a geranylgeranyl pyrophosphate (GGPP) produced by the GGPP synthase (GGPPS) esdpD onto the pyrone unit; the FAD-dependent monooxygenase esdpE that converts an olefin on the diterpene unit into an epoxide; and the terpene cyclase esdpB that catalyzes the cyclization reactions to give the molecular backbone shearone A. In the modification steps, esdpF oxidizes the hydroxy group to a ketone at C-3 and esdpG then attaches hydroxy groups at both C-11 and C-12. After that, esdpI hydroxylates at C-20 and esdpH hydroxylates at C-6'. The ether bridge is generated by nucleophilic attack of the hydroxy group at C-20 to the carbonyl carbon at C-3. EsdpH can also functions prior to esdpI. The different combinations of these modification enzymes lead to the production of diverse shearone derivatives, shearone I being the end product of the pathway. The alpha-ketoglutarate-dependent dioxygenase esdpJ seems not to be involved in this pathway. The chain is Terpene cyclase esdpB from Penicillium shearii (Eupenicillium shearii).